A 493-amino-acid polypeptide reads, in one-letter code: Ketol-acid reductoisomerase (NADP(+)) (493 aa).

Residues 14-208 (LDQLGRCRFM…GGDRAGVLES (195 aa)) form the KARI N-terminal Rossmann domain. NADP(+) contacts are provided by residues 45-48 (CGAQ), Arg-68, Arg-76, Ser-78, and 108-110 (DKQ). His-132 is a catalytic residue. Gly-158 is a binding site for NADP(+). 2 KARI C-terminal knotted domains span residues 209-345 (SFVA…APKA) and 346-486 (DGIK…MTDM). Mg(2+) contacts are provided by Asp-217, Glu-221, Glu-390, and Glu-394. Residue Ser-415 participates in substrate binding.

It belongs to the ketol-acid reductoisomerase family. It depends on Mg(2+) as a cofactor.

It carries out the reaction (2R)-2,3-dihydroxy-3-methylbutanoate + NADP(+) = (2S)-2-acetolactate + NADPH + H(+). The enzyme catalyses (2R,3R)-2,3-dihydroxy-3-methylpentanoate + NADP(+) = (S)-2-ethyl-2-hydroxy-3-oxobutanoate + NADPH + H(+). It participates in amino-acid biosynthesis; L-isoleucine biosynthesis; L-isoleucine from 2-oxobutanoate: step 2/4. The protein operates within amino-acid biosynthesis; L-valine biosynthesis; L-valine from pyruvate: step 2/4. Its function is as follows. Involved in the biosynthesis of branched-chain amino acids (BCAA). Catalyzes an alkyl-migration followed by a ketol-acid reduction of (S)-2-acetolactate (S2AL) to yield (R)-2,3-dihydroxy-isovalerate. In the isomerase reaction, S2AL is rearranged via a Mg-dependent methyl migration to produce 3-hydroxy-3-methyl-2-ketobutyrate (HMKB). In the reductase reaction, this 2-ketoacid undergoes a metal-dependent reduction by NADPH to yield (R)-2,3-dihydroxy-isovalerate. The sequence is that of Ketol-acid reductoisomerase (NADP(+)) from Mannheimia succiniciproducens (strain KCTC 0769BP / MBEL55E).